Reading from the N-terminus, the 261-residue chain is MLICNDKFNPKTLLEEIMALRPWRKGPFEISQIKIDSEWDSSIKWDLVKNATPLKDKVVADVGCNNGYYLFKMLEHKPKSLVGFDPGVLVKKQFEFLAPFFDKEKKIIYESLGVEDFHEKYPNAFDVIFCLGVLYHRKSPLEALKALYHALKIKGELVLDTLIIDSPLDIALCPKKTYAKMKNVYFIPSVSALKGWCERVGFENFEILSVLKTTPKEQRKTDFILGQSLEDFLDKTDHSKTLEGYDAPLRGYFKMLKPSKR.

Carboxy-S-adenosyl-L-methionine is bound by residues K25, W39, K44, G63, 114–115, Y135, and R250; that span reads VE.

Belongs to the class I-like SAM-binding methyltransferase superfamily. CmoB family. In terms of assembly, homotetramer.

It catalyses the reaction carboxy-S-adenosyl-L-methionine + 5-hydroxyuridine(34) in tRNA = 5-carboxymethoxyuridine(34) in tRNA + S-adenosyl-L-homocysteine + H(+). Catalyzes carboxymethyl transfer from carboxy-S-adenosyl-L-methionine (Cx-SAM) to 5-hydroxyuridine (ho5U) to form 5-carboxymethoxyuridine (cmo5U) at position 34 in tRNAs. This is tRNA U34 carboxymethyltransferase from Helicobacter pylori (strain J99 / ATCC 700824) (Campylobacter pylori J99).